A 212-amino-acid chain; its full sequence is Thiamine-phosphate synthase (212 aa).

4-amino-2-methyl-5-(diphosphooxymethyl)pyrimidine is bound by residues 41–45 (QYREK) and Asp-76. Mg(2+) is bound by residues Asp-77 and Asp-96. Ser-114 contacts 4-amino-2-methyl-5-(diphosphooxymethyl)pyrimidine. A 2-[(2R,5Z)-2-carboxy-4-methylthiazol-5(2H)-ylidene]ethyl phosphate-binding site is contributed by 141 to 143 (TTS). Lys-144 provides a ligand contact to 4-amino-2-methyl-5-(diphosphooxymethyl)pyrimidine. Residues Gly-172 and 192 to 193 (IS) contribute to the 2-[(2R,5Z)-2-carboxy-4-methylthiazol-5(2H)-ylidene]ethyl phosphate site.

Belongs to the thiamine-phosphate synthase family. Requires Mg(2+) as cofactor.

The catalysed reaction is 2-[(2R,5Z)-2-carboxy-4-methylthiazol-5(2H)-ylidene]ethyl phosphate + 4-amino-2-methyl-5-(diphosphooxymethyl)pyrimidine + 2 H(+) = thiamine phosphate + CO2 + diphosphate. The enzyme catalyses 2-(2-carboxy-4-methylthiazol-5-yl)ethyl phosphate + 4-amino-2-methyl-5-(diphosphooxymethyl)pyrimidine + 2 H(+) = thiamine phosphate + CO2 + diphosphate. It catalyses the reaction 4-methyl-5-(2-phosphooxyethyl)-thiazole + 4-amino-2-methyl-5-(diphosphooxymethyl)pyrimidine + H(+) = thiamine phosphate + diphosphate. Its pathway is cofactor biosynthesis; thiamine diphosphate biosynthesis; thiamine phosphate from 4-amino-2-methyl-5-diphosphomethylpyrimidine and 4-methyl-5-(2-phosphoethyl)-thiazole: step 1/1. Functionally, condenses 4-methyl-5-(beta-hydroxyethyl)thiazole monophosphate (THZ-P) and 2-methyl-4-amino-5-hydroxymethyl pyrimidine pyrophosphate (HMP-PP) to form thiamine monophosphate (TMP). The polypeptide is Thiamine-phosphate synthase (Leuconostoc citreum (strain KM20)).